The sequence spans 130 residues: 3-aminoacrylate deaminase RutC (130 aa).

This sequence belongs to the RutC family.

It catalyses the reaction (Z)-3-aminoacrylate + H2O + H(+) = 3-oxopropanoate + NH4(+). Its function is as follows. Involved in pyrimidine catabolism. Catalyzes the deamination of 3-aminoacrylate to malonic semialdehyde, a reaction that can also occur spontaneously. RutC may facilitate the reaction and modulate the metabolic fitness, rather than catalyzing essential functions. The chain is 3-aminoacrylate deaminase RutC from Klebsiella pneumoniae (strain 342).